The following is a 219-amino-acid chain: MTIRILCDFDGTVTEHDNIIALMTEFAPPEAFEPLKKGVLDQSLSIQSGVGQMFRLLPSDRKQDYIDFLEQRAVIRPGFKTLLAFAKSNGIDFAIVSGGIDFFVQPILQELLTDEAIYCNGSDFSGETIRIEWPHTCDAACNNQCGCCKTSIARKLKQDGDIIVTIGDSVTDFELAKQADHVYARDYLITLCEQHGIAYTPFETFYDIVDHLQTTEVYA.

This sequence belongs to the HAD-like hydrolase superfamily. MtnX family.

The enzyme catalyses 2-hydroxy-5-methylsulfanyl-3-oxopent-1-enyl phosphate + H2O = 1,2-dihydroxy-5-(methylsulfanyl)pent-1-en-3-one + phosphate. Its pathway is amino-acid biosynthesis; L-methionine biosynthesis via salvage pathway; L-methionine from S-methyl-5-thio-alpha-D-ribose 1-phosphate: step 4/6. Dephosphorylates 2-hydroxy-3-keto-5-methylthiopentenyl-1-phosphate (HK-MTPenyl-1-P) yielding 1,2-dihydroxy-3-keto-5-methylthiopentene (DHK-MTPene). The chain is 2-hydroxy-3-keto-5-methylthiopentenyl-1-phosphate phosphatase from Exiguobacterium sibiricum (strain DSM 17290 / CCUG 55495 / CIP 109462 / JCM 13490 / 255-15).